A 218-amino-acid chain; its full sequence is Sodium channel regulatory subunit beta-1 (218 aa).

The N-terminal stretch at 1–18 (MGRLLAFVVGAALVSSAW) is a signal peptide. Topologically, residues 19-157 (GGCVEVDSET…DKANRDMASI (139 aa)) are extracellular. Cystine bridges form between Cys-21–Cys-43 and Cys-40–Cys-121. Positions 22-150 (VEVDSETEAV…KIHLEVVDKA (129 aa)) constitute an Ig-like C2-type domain. Residues Asn-93, Asn-110, Asn-114, and Asn-135 are each glycosylated (N-linked (GlcNAc...) asparagine). Residues 158–179 (VSEIMMYVLIVVLTIWLVAEMV) form a helical membrane-spanning segment. Residues 180–218 (YCYKKIAAATEAAAQENASEYLAITSESKENCTGVQVAE) are Cytoplasmic-facing.

This sequence belongs to the sodium channel auxiliary subunit SCN1B (TC 8.A.17) family. A voltage-gated sodium (Nav) channel consists of an ion-conducting pore-forming alpha subunit functional on its own that is regulated by one or more beta subunits. Interacts with SCN1A; regulatory subunit of SCN1A/Nav1.1. Interacts with SCN3A; regulatory subunit of SCN3A/Nav1.3. Interacts with SCN4A; regulatory subunit of SCN4A/Nav1.4. Interacts with SCN5A; regulatory subunit of SCN5A/Nav1.5. Interacts with SCN8A; regulatory subunit of SCN8A/Nav1.6. Interacts with SCN9A; regulatory subunit of SCN9A/Nav1.7. Interacts with SCN10A; regulatory subunit of SCN10A/Nav1.8. Interacts with NFASC. Interacts with TMEM65.

It is found in the cell membrane. Its subcellular location is the perikaryon. It localises to the cell projection. The protein localises to the axon. Its function is as follows. Regulatory subunit of multiple voltage-gated sodium (Nav) channels directly mediating the depolarization of excitable membranes. Navs, also called VGSCs (voltage-gated sodium channels) or VDSCs (voltage-dependent sodium channels), operate by switching between closed and open conformations depending on the voltage difference across the membrane. In the open conformation they allow Na(+) ions to selectively pass through the pore, along their electrochemical gradient. The influx of Na+ ions provokes membrane depolarization, initiating the propagation of electrical signals throughout cells and tissues. The accessory beta subunits participate in localization and functional modulation of the Nav channels. Modulates the activity of SCN1A/Nav1.1, SCN2A/Nav1.2, SCN3A/Nav1.3, SCN4A/Nav1.4, SCN5A/Nav1.5, SCN8A/Nav1.6, SCN9A/Nav1.7 and SCN10A/Nav1.8. The chain is Sodium channel regulatory subunit beta-1 from Oryctolagus cuniculus (Rabbit).